Reading from the N-terminus, the 123-residue chain is Large ribosomal subunit protein uL29 (123 aa).

The interval 84–123 is disordered; sequence RPKKTRAMRRRLNKHEEGLKTKKQQRKERLYPPRKYAVKA. The span at 86–96 shows a compositional bias: basic residues; that stretch reads KKTRAMRRRLN.

The protein belongs to the universal ribosomal protein uL29 family. As to quaternary structure, component of the large ribosomal subunit.

The protein resides in the cytoplasm. Its function is as follows. Component of the large ribosomal subunit. The ribosome is a large ribonucleoprotein complex responsible for the synthesis of proteins in the cell. This chain is Large ribosomal subunit protein uL29 (RPL35), found in Ophiophagus hannah (King cobra).